A 205-amino-acid polypeptide reads, in one-letter code: Large ribosomal subunit protein uL3 (205 aa).

Positions 126 to 150 (GGPKTHGQSDRHRAPGSISSTTTPG) are disordered.

It belongs to the universal ribosomal protein uL3 family. In terms of assembly, part of the 50S ribosomal subunit. Forms a cluster with proteins L14 and L19.

Its function is as follows. One of the primary rRNA binding proteins, it binds directly near the 3'-end of the 23S rRNA, where it nucleates assembly of the 50S subunit. This is Large ribosomal subunit protein uL3 from Dehalococcoides mccartyi (strain ATCC BAA-2266 / KCTC 15142 / 195) (Dehalococcoides ethenogenes (strain 195)).